We begin with the raw amino-acid sequence, 423 residues long: UDP-N-acetylglucosamine 1-carboxyvinyltransferase (423 aa).

22-23 (KN) serves as a coordination point for phosphoenolpyruvate. Arg98 provides a ligand contact to UDP-N-acetyl-alpha-D-glucosamine. Cys122 functions as the Proton donor in the catalytic mechanism. Cys122 carries the 2-(S-cysteinyl)pyruvic acid O-phosphothioketal modification. Residues 127 to 131 (RPVDQ), Asp311, and Ile333 each bind UDP-N-acetyl-alpha-D-glucosamine.

Belongs to the EPSP synthase family. MurA subfamily.

It is found in the cytoplasm. It carries out the reaction phosphoenolpyruvate + UDP-N-acetyl-alpha-D-glucosamine = UDP-N-acetyl-3-O-(1-carboxyvinyl)-alpha-D-glucosamine + phosphate. Its pathway is cell wall biogenesis; peptidoglycan biosynthesis. Its function is as follows. Cell wall formation. Adds enolpyruvyl to UDP-N-acetylglucosamine. The protein is UDP-N-acetylglucosamine 1-carboxyvinyltransferase of Stenotrophomonas maltophilia (strain K279a).